We begin with the raw amino-acid sequence, 130 residues long: Large ribosomal subunit protein uL22 (130 aa).

This sequence belongs to the universal ribosomal protein uL22 family. As to quaternary structure, part of the 50S ribosomal subunit.

This protein binds specifically to 23S rRNA; its binding is stimulated by other ribosomal proteins, e.g. L4, L17, and L20. It is important during the early stages of 50S assembly. It makes multiple contacts with different domains of the 23S rRNA in the assembled 50S subunit and ribosome. Functionally, the globular domain of the protein is located near the polypeptide exit tunnel on the outside of the subunit, while an extended beta-hairpin is found that lines the wall of the exit tunnel in the center of the 70S ribosome. The polypeptide is Large ribosomal subunit protein uL22 (Clavibacter sepedonicus (Clavibacter michiganensis subsp. sepedonicus)).